We begin with the raw amino-acid sequence, 356 residues long: Isocitrate dehydrogenase [NAD] subunit 1, mitochondrial (356 aa).

Positions 106, 137, and 224 each coordinate substrate. D224 contributes to the Mg(2+) binding site.

It belongs to the isocitrate and isopropylmalate dehydrogenases family. Octamer of two non-identical subunits IDH1 and IDH2. The cofactor is Mg(2+). It depends on Mn(2+) as a cofactor.

It is found in the mitochondrion. The enzyme catalyses D-threo-isocitrate + NAD(+) = 2-oxoglutarate + CO2 + NADH. In terms of biological role, performs an essential role in the oxidative function of the citric acid cycle. Also binds RNA; specifically to the 5'-untranslated leaders of mitochondrial mRNAs. In Schizosaccharomyces pombe (strain 972 / ATCC 24843) (Fission yeast), this protein is Isocitrate dehydrogenase [NAD] subunit 1, mitochondrial (idh1).